The following is a 286-amino-acid chain: Shikimate dehydrogenase (NADP(+)) (286 aa).

Shikimate contacts are provided by residues 19-21 (SLS) and Thr66. Catalysis depends on Lys70, which acts as the Proton acceptor. Shikimate contacts are provided by Asn91 and Asp107. Residues 129-133 (GSGGA) and Leu229 contribute to the NADP(+) site. Residue Tyr231 participates in shikimate binding. Gly252 serves as a coordination point for NADP(+).

This sequence belongs to the shikimate dehydrogenase family. Homodimer.

It catalyses the reaction shikimate + NADP(+) = 3-dehydroshikimate + NADPH + H(+). It participates in metabolic intermediate biosynthesis; chorismate biosynthesis; chorismate from D-erythrose 4-phosphate and phosphoenolpyruvate: step 4/7. In terms of biological role, involved in the biosynthesis of the chorismate, which leads to the biosynthesis of aromatic amino acids. Catalyzes the reversible NADPH linked reduction of 3-dehydroshikimate (DHSA) to yield shikimate (SA). The polypeptide is Shikimate dehydrogenase (NADP(+)) (Prochlorococcus marinus (strain MIT 9312)).